Here is a 499-residue protein sequence, read N- to C-terminus: Putative sperm motility kinase W (499 aa).

One can recognise a Protein kinase domain in the interval 14-262 (YKVLFTLGHG…IEDIERHPWV (249 aa)). ATP-binding positions include 20-28 (LGHGSFGTV) and K43. D133 serves as the catalytic Proton acceptor. The UBA domain maps to 274–314 (DPDYNIIEMLCGMGFDANEILESLQRKKYNESMGAYLILKA).

It belongs to the protein kinase superfamily. CAMK Ser/Thr protein kinase family. Smok subfamily.

The enzyme catalyses L-seryl-[protein] + ATP = O-phospho-L-seryl-[protein] + ADP + H(+). It carries out the reaction L-threonyl-[protein] + ATP = O-phospho-L-threonyl-[protein] + ADP + H(+). In terms of biological role, may play a role in sperm motility, especially in the regulation of flagellar function. In Mus musculus (Mouse), this protein is Putative sperm motility kinase W.